We begin with the raw amino-acid sequence, 738 residues long: Glycogen [starch] synthase, muscle (738 aa).

S8 carries the phosphoserine; by AMPK and PKA modification. At S11 the chain carries Phosphoserine. K39 contacts UDP. H205 and R211 together coordinate UDP-alpha-D-glucose. Positions 291, 292, 294, 297, and 301 each coordinate alpha-D-glucose 6-phosphate. Residue R331 participates in UDP binding. A UDP-alpha-D-glucose-binding site is contributed by R331. Residue S412 is modified to Phosphoserine. An alpha-D-glucose 6-phosphate-binding site is contributed by H501. UDP-alpha-D-glucose contacts are provided by E510, W512, and G513. Position 515 (T515) interacts with UDP. Alpha-D-glucose 6-phosphate contacts are provided by R582 and R586. Residues 632–738 are disordered; sequence QGYRYPRPAS…PTSSLGEERN (107 aa). S641 bears the Phosphoserine; by DYRK2, GSK3-alpha, GSK3-beta and PASK mark. Residues S645, S649, S652, S653, S657, and S672 each carry the phosphoserine modification. Positions 658-681 are enriched in acidic residues; sequence EDEEEPRDGPLGEDSERYDEEEEA. Residues 682 to 695 are compositionally biased toward basic and acidic residues; that stretch reads AKDRRNIRAPEWPR. A phosphoserine mark is found at S698, S709, and S711. Positions 698–738 are enriched in low complexity; the sequence is SCSSSTGGSKRSNSVDTGPSSSLSTPTEPLSPTSSLGEERN. A phosphothreonine mark is found at T722 and T724. Residues S728 and S732 each carry the phosphoserine modification.

The protein belongs to the glycosyltransferase 3 family. Part of the GYS1-GYG1 complex, a heterooctamer composed of a tetramer of GYS1 and 2 dimers of GYG1, where each GYS1 protomer binds to one GYG1 subunit (via GYG1 C-terminus); the GYS1 tetramer may dissociate from GYG1 dimers to continue glycogen polymerization on its own. Primed phosphorylation at Ser-657 (site 5) by CSNK2A1 and CSNK2A2 is required for inhibitory phosphorylation at Ser-641 (site 3a), Ser-645 (site 3b), Ser-649 (site 3c) and Ser-653 (site 4) by GSK3A an GSK3B. Phosphorylated at Ser-641 by PASK, leading to inactivation; phosphorylation by PASK is inhibited by glycogen. Phosphorylated at Ser-641 by DYRK2, leading to inactivation. Dephosphorylation at Ser-641 and Ser-645 by PP1 activates the enzyme. Phosphorylation at Ser-8 by AMPK inactivates the enzyme activity.

The enzyme catalyses [(1-&gt;4)-alpha-D-glucosyl](n) + UDP-alpha-D-glucose = [(1-&gt;4)-alpha-D-glucosyl](n+1) + UDP + H(+). It functions in the pathway glycan biosynthesis; glycogen biosynthesis. Its activity is regulated as follows. Allosteric activation by glucose-6-phosphate. Phosphorylation reduces the activity towards UDP-glucose. When in the non-phosphorylated state, glycogen synthase does not require glucose-6-phosphate as an allosteric activator; when phosphorylated it does. Glycogen synthase participates in the glycogen biosynthetic process along with glycogenin and glycogen branching enzyme. Extends the primer composed of a few glucose units formed by glycogenin by adding new glucose units to it. In this context, glycogen synthase transfers the glycosyl residue from UDP-Glc to the non-reducing end of alpha-1,4-glucan. The chain is Glycogen [starch] synthase, muscle (Gys1) from Mus musculus (Mouse).